The sequence spans 515 residues: MTTLSAKTLNLIPGQLTLAQLRAIHQQPVSLTLDSSANQQIDDSVACVERILAENRTAYGINTGFGLLASTRIASEDLENLQRSLVLSHAAGVGQPISDDLVRLIMVLKVNSLSRGFSGIRRVVIDALIALINAEVYPHIPLKGSVGASGDLAPLAHMSLVLLGEGKARHKGEWLNAVDALAVAGLKPLTLAAKEGLALLNGTQVSTAYALRGLFEGEDLFAAALTCGSLTVEAVLGSRSPFDARIHAARGQRGQIDAAACYRELLGESSGVSESHRNCDKVQDPYSLRCQPQVMGACLTQLRQAAEVLEVESNAVSDNPLVFAAENDVISGGNFHAEPVAMAADNLALAIAEIGSLSERRISLMMDKHMSQLPPFLVANGGVNSGFMIAQVTAAALASENKALAHPHSVDSLPTSANQEDHVSMAPAAGKRLWEMAENVRGILAVEWLAACQGLDLREGLKTSAKLEQARSLLRSKVPFYEKDRFFAPDIEAASQLLSSTCLNPLVPARLLPSL.

The segment at residues 148–150 (ASG) is a cross-link (5-imidazolinone (Ala-Gly)). 2,3-didehydroalanine (Ser) is present on Ser149.

Belongs to the PAL/histidase family. Contains an active site 4-methylidene-imidazol-5-one (MIO), which is formed autocatalytically by cyclization and dehydration of residues Ala-Ser-Gly.

The protein localises to the cytoplasm. The enzyme catalyses L-histidine = trans-urocanate + NH4(+). It functions in the pathway amino-acid degradation; L-histidine degradation into L-glutamate; N-formimidoyl-L-glutamate from L-histidine: step 1/3. This chain is Histidine ammonia-lyase, found in Pseudomonas syringae pv. tomato (strain ATCC BAA-871 / DC3000).